The chain runs to 420 residues: UDP-N-acetylglucosamine 1-carboxyvinyltransferase (420 aa).

22 to 23 (KN) contributes to the phosphoenolpyruvate binding site. Position 93 (Arg-93) interacts with UDP-N-acetyl-alpha-D-glucosamine. Cys-117 acts as the Proton donor in catalysis. A 2-(S-cysteinyl)pyruvic acid O-phosphothioketal modification is found at Cys-117. Positions 307 and 329 each coordinate UDP-N-acetyl-alpha-D-glucosamine.

This sequence belongs to the EPSP synthase family. MurA subfamily.

It localises to the cytoplasm. It catalyses the reaction phosphoenolpyruvate + UDP-N-acetyl-alpha-D-glucosamine = UDP-N-acetyl-3-O-(1-carboxyvinyl)-alpha-D-glucosamine + phosphate. Its pathway is cell wall biogenesis; peptidoglycan biosynthesis. Cell wall formation. Adds enolpyruvyl to UDP-N-acetylglucosamine. The protein is UDP-N-acetylglucosamine 1-carboxyvinyltransferase of Alcanivorax borkumensis (strain ATCC 700651 / DSM 11573 / NCIMB 13689 / SK2).